Reading from the N-terminus, the 149-residue chain is Ribonuclease pancreatic (149 aa).

The signal sequence occupies residues 1-25 (MGLEKSFILFSLLVLVLGWVQPSLS). Over residues 30–40 (ADKFKRQHMDT) the composition is skewed to basic and acidic residues. Residues 30–49 (ADKFKRQHMDTEGSSNSSPT) form a disordered region. Positions 32 and 35 each coordinate substrate. H37 serves as the catalytic Proton acceptor. 4 disulfide bridges follow: C51/C109, C65/C120, C83/C135, and C90/C97. N-linked (GlcNAc...) asparagine glycosylation occurs at N62. Residue 66-70 (KPVNT) coordinates substrate. The N-linked (GlcNAc...) asparagine glycan is linked to N87. The substrate site is built by K91 and R110. The active-site Proton donor is H144.

This sequence belongs to the pancreatic ribonuclease family. In terms of assembly, monomer. Interacts with and forms tight 1:1 complexes with RNH1. Dimerization of two such complexes may occur. Interaction with RNH1 inhibits this protein. In terms of tissue distribution, pancreas.

The protein localises to the secreted. The enzyme catalyses an [RNA] containing cytidine + H2O = an [RNA]-3'-cytidine-3'-phosphate + a 5'-hydroxy-ribonucleotide-3'-[RNA].. The catalysed reaction is an [RNA] containing uridine + H2O = an [RNA]-3'-uridine-3'-phosphate + a 5'-hydroxy-ribonucleotide-3'-[RNA].. Its function is as follows. Endonuclease that catalyzes the cleavage of RNA on the 3' side of pyrimidine nucleotides. Acts on single-stranded and double-stranded RNA. The protein is Ribonuclease pancreatic (RNASE1) of Niviventer cremoriventer (Dark-tailed tree rat).